The sequence spans 339 residues: DNA repair protein RAD51 homolog 1 (339 aa).

Residues 1 to 22 (MAMQMQLEASADTSVEEESFGP) are disordered. An N-acetylalanine modification is found at Ala2. Thr13 is subject to Phosphothreonine. Ser14 bears the Phosphoserine mark. Residues 48 to 77 (TVEAVAYAPKKELINIKGISEAKADKILTE) form the HhH domain. Residue Tyr54 is modified to Phosphotyrosine; by ABL1. Residues Lys58 and Lys64 each participate in a glycyl lysine isopeptide (Lys-Gly) (interchain with G-Cter in ubiquitin) cross-link. 127–134 (GEFRTGKT) contacts ATP. The segment at 184–257 (DVLDNVAYAR…FLRMLLRLAD (74 aa)) is interaction with PALB2. A Nuclear export signal; masked by the interaction with BRCA2 motif is present at residues 245–260 (LARFLRMLLRLADEFG). At Thr309 the chain carries Phosphothreonine; by CHEK1.

It belongs to the RecA family. RAD51 subfamily. Forms linear homooligomers, giving rise to a RAD51 nucleoprotein filament, which is essential for strand-pairing reactions during DNA recombination. Interacts with BRCA1 and either directly or indirectly with p53. Interacts with XRCC3, RAD54L and RAD54B. Interacts with the BCDX2 subcomplex RAD51C:RAD51B. Component of the homologous recombination repair (HR) complex composed of ERCC5/XPG, BRCA2, PALB2, DSS1 and RAD51. Interacts directly with PALB2 which may serve as a scaffold for a HR complex containing PALB2, BRCA2, RAD51C, RAD51 and XRCC3. Interacts with RAD51AP1 and RAD51AP2. Interacts with CHEK1, and this may require prior phosphorylation of CHEK1. Interacts with the MND1-PSMC3IP heterodimer. Found in a complex, at least composed of BLM, RAD51 and SPIDR; the complex formation is mediated by SPIDR. Interacts with SPIDR; the interaction is direct and recruits RAD51 to DNA damage sites. Interacts with FIGNL1 (via N-terminal one-half region); the interaction is direct. Interacts with RAD51AP1 (via C-terminal region); the interaction is direct. Interacts with NABP2, RPA1, PALB2 and RAD51. Interacts with SWI5/C9orf119, and at lower level with SFR1/MEIR5. Interacts with hyperphosphorylated RPA2; this interaction is necessary for efficient recruitment to chromatin in response to DNA damage. Interacts with SWSAP1; involved in homologous recombination repair. Interacts with PARPBP, BRCA2 and RECQL5; these interactions interfere with the formation of the RAD51-DNA homologous recombination structure. Interacts with POLQ; POLQ acts as an inhibitor of homology-recombination repair (HR) pathway by limiting RAD51 accumulation at resected ends. Interacts with POLN. Interacts with FBH1. Interacts with RFWD3. Interacts with the MCM8-MCM9 complex; the interaction recruits RAD51 to DNA damage sites. Component of a multiprotein complex with MEIOB and SPATA22. Interacts with the complex BRME1:HSF2BP:BRCA2. Interacts with HELQ; stimulating HELQ DNA helicase activity and ability to unwing DNA. Interacts with MMS22L; the interaction is direct and promotes recruitment of RAD51 to sites of DNA damage. Interacts with the ATAD5 RFC-like complex. Within the ATAD5 RFC-like complex, interacts with ATAD5 (via N-terminus); the interaction is direct and enhanced under replication stress. Interacts with WDR48; the interaction is enhanced under replication stress. Interacts with DNA helicase ZGRF1; the interaction promotes RAD51 strand exchange activity. Interacts (when phosphorylated) with TOPBP1; interaction takes place following phosphorylation by CK2 and PLK1 and promotes recruitment to DNA damage sites. Interacts with GRB2; this interaction inhibits RAD51 ATPase activity to stabilize RAD51 on stalled replication forks. Post-translationally, ubiquitinated by the SCF(FBH1) E3 ubiquitin ligase complex, regulating RAD51 subcellular location and preventing its association with DNA. Ubiquitinated by RFWD3 in response to DNA damage: ubiquitination leads to degradation by the proteasome, promoting homologous recombination. Phosphorylation of Thr-309 by CHEK1 may enhance association with chromatin at sites of DNA damage and promote DNA repair by homologous recombination. Phosphorylated at Ser-14 by PLK1, triggering phosphorylation at Thr-13 by CK2, thereby promoting interaction with TOPBP1 and recruitment to DNA damage sites during S-phase. Phosphorylation by ABL1 inhibits function. As to expression, expressed in the testes (at protein level). Expressed in the brain (at protein level). Expressed in the thymus, spleen, ovary and small intestine.

It is found in the nucleus. The protein localises to the cytoplasm. Its subcellular location is the perinuclear region. It localises to the mitochondrion matrix. The protein resides in the chromosome. It is found in the cytoskeleton. The protein localises to the microtubule organizing center. Its subcellular location is the centrosome. Plays an important role in homologous strand exchange, a key step in DNA repair through homologous recombination (HR). Binds to single-stranded DNA in an ATP-dependent manner to form nucleoprotein filaments which are essential for the homology search and strand exchange. Catalyzes the recognition of homology and strand exchange between homologous DNA partners to form a joint molecule between a processed DNA break and the repair template. Recruited to resolve stalled replication forks during replication stress. Part of a PALB2-scaffolded HR complex containing BRCA2 and RAD51C and which is thought to play a role in DNA repair by HR. Plays a role in regulating mitochondrial DNA copy number under conditions of oxidative stress in the presence of RAD51C and XRCC3. Also involved in interstrand cross-link repair. This Mus musculus (Mouse) protein is DNA repair protein RAD51 homolog 1.